Consider the following 130-residue polypeptide: D-ribose pyranase (130 aa).

The active-site Proton donor is His-20. Substrate-binding positions include Asp-28, His-97, and 119-121; that span reads YAN.

The protein belongs to the RbsD / FucU family. RbsD subfamily. Homodecamer.

It is found in the cytoplasm. The enzyme catalyses beta-D-ribopyranose = beta-D-ribofuranose. It functions in the pathway carbohydrate metabolism; D-ribose degradation; D-ribose 5-phosphate from beta-D-ribopyranose: step 1/2. In terms of biological role, catalyzes the interconversion of beta-pyran and beta-furan forms of D-ribose. The protein is D-ribose pyranase of Paracidovorax citrulli (strain AAC00-1) (Acidovorax citrulli).